We begin with the raw amino-acid sequence, 331 residues long: MASVTSVPKTGRSVNQDVPATTLTLQTRPTPAPNFDEGEHLIRVHATALCAGELYWHTYVTFTKEETVPGPDVAGTVVLAPPSSPFKPGDDVYCRIPYSRAGGARDHTIALTSELARKPKNLTWEEAATVPLSALTAWQALFDQSGLWEGPEDERVKGKRVAVTAASGAVGMWILQFARIAGFDAVIGTCGDGNEDFVKSMGATDAVNYKTTSLTAWAAEKQGRKADLVIDCFGGKSLADAWGCVKDGGVLISMVGYPEQEKPAGLEVKDVKSHFFIMEPRGDQLQKVTELVEQGKCSFLMDSVYPLEQFQEATDKVESRRVRGKVVLKVL.

Positions 1–29 (MASVTSVPKTGRSVNQDVPATTLTLQTRP) are enriched in polar residues. Residues 1–34 (MASVTSVPKTGRSVNQDVPATTLTLQTRPTPAPN) are disordered.

Belongs to the zinc-containing alcohol dehydrogenase family. Quinone oxidoreductase subfamily.

It is found in the mitochondrion. This chain is Probable zinc-binding oxidoreductase, mitochondrial, found in Arthroderma benhamiae (strain ATCC MYA-4681 / CBS 112371) (Trichophyton mentagrophytes).